An 89-amino-acid chain; its full sequence is Sec-independent protein translocase protein TatA (89 aa).

Residues 1-21 (MGGISIWQLLIIAVIVVLLFG) traverse the membrane as a helical segment. The tract at residues 65–89 (ADKQADTNQEQAKTEDAKRHDKEQV) is disordered. Basic and acidic residues predominate over residues 76-89 (AKTEDAKRHDKEQV).

It belongs to the TatA/E family. The Tat system comprises two distinct complexes: a TatABC complex, containing multiple copies of TatA, TatB and TatC subunits, and a separate TatA complex, containing only TatA subunits. Substrates initially bind to the TatABC complex, which probably triggers association of the separate TatA complex to form the active translocon.

It localises to the cell inner membrane. Part of the twin-arginine translocation (Tat) system that transports large folded proteins containing a characteristic twin-arginine motif in their signal peptide across membranes. TatA could form the protein-conducting channel of the Tat system. This Shigella flexneri protein is Sec-independent protein translocase protein TatA.